Reading from the N-terminus, the 1017-residue chain is Voltage-gated delayed rectifier potassium channel KCNH4 (1017 aa).

Residues 1-228 are Cytoplasmic-facing; sequence MPVMKGLLAP…LLHYSVSKAI (228 aa). One can recognise a PAS domain in the interval 14-90; sequence FLDTIATRFD…QRLHKALEGH (77 aa). In terms of domain architecture, PAC spans 93–145; sequence HRAEICFYRKDGSAFWCLLDMMPIKNEMGEVVLFLFSFKDITQSGSPGLGPQG. Residues 138-157 form a disordered region; it reads SPGLGPQGGRGDSNHENSLG. Positions 139 to 148 are enriched in gly residues; that stretch reads PGLGPQGGRG. The helical transmembrane segment at 229-249 threads the bilayer; that stretch reads WDGLILLATFYVAVTVPYNVC. Topologically, residues 250–259 are extracellular; sequence FSGDDDTPIT. A helical transmembrane segment spans residues 260 to 280; sequence SRHTLVSDIAVEMLFILDIIL. Residues 281 to 302 are Cytoplasmic-facing; that stretch reads NFRTTYVSQSGQVISAPRSIGL. Residues 303 to 323 form a helical membrane-spanning segment; it reads HYLATWFFIDLIAALPFDLLY. Residues 324-332 lie on the Extracellular side of the membrane; the sequence is IFNITVTSL. N-linked (GlcNAc...) asparagine glycosylation occurs at Asn-326. Residues 333–353 traverse the membrane as a helical; Voltage-sensor segment; sequence VHLLKTVRLLRLLRLLQKLER. Residues 354–361 lie on the Cytoplasmic side of the membrane; the sequence is YSQCSAVV. Residues 362–382 form a helical membrane-spanning segment; that stretch reads LTLLMSVFALLAHWMACIWYV. Residues 383-427 lie on the Extracellular side of the membrane; sequence IGRREMEANDPLLWDIGWLHELGKRLEVPYVNGSVGGPSRRSAYI. Asn-414 is a glycosylation site (N-linked (GlcNAc...) asparagine). Positions 428 to 448 form an intramembrane region, pore-forming; the sequence is AALYFTLSSLTSVGFGNVCAN. The Selectivity filter signature appears at 439–444; it reads SVGFGN. Topologically, residues 449–482 are extracellular; that stretch reads TDAEKIFSICTMLIGALMHAVVFGNVTAIIQRMY. Residue Asn-473 is glycosylated (N-linked (GlcNAc...) asparagine). A helical transmembrane segment spans residues 483–503; it reads SRRSLYHSRMKDLKDFIRVHR. Residues 504-1017 lie on the Cytoplasmic side of the membrane; that stretch reads LPRPLKQRML…SFQSRSDTFH (514 aa). Positions 556-620 are cNMP-binding domain; sequence LFGAASRGCL…AILGKGDLIG (65 aa). Residues 691 to 724 show a composition bias toward polar residues; sequence GSDTSGLSRFSRSPRLSQPRSESLGSSSDKTLPS. 4 disordered regions span residues 691-749, 772-803, 821-875, and 971-1017; these read GSDT…LPNL, LVSSPSLSPSLSPALAGQGHSASPHGPPRCSA, PDLS…EAEE, and LLDL…DTFH. Positions 772–787 are enriched in low complexity; the sequence is LVSSPSLSPSLSPALA. The segment covering 978–1002 has biased composition (pro residues); that stretch reads ILPPYPSEPDPLGPSPVPEASPPTP. The span at 1008–1017 shows a compositional bias: polar residues; that stretch reads SFQSRSDTFH.

It belongs to the potassium channel family. H (Eag) (TC 1.A.1.20) subfamily. Kv12.3/KCNH4 sub-subfamily. The potassium channel is probably composed of a homo- or heterotetrameric complex of pore-forming alpha subunits that can associate with modulating beta subunits. Detected only in brain, in particular in the telencephalon. Detected in putamen and caudate nucleus, and at lower levels in cerebral cortex, occipital and hippocampus.

The protein localises to the membrane. The enzyme catalyses K(+)(in) = K(+)(out). In terms of biological role, pore-forming (alpha) subunit of a voltage-gated delayed rectifier. Activates at more negative voltages, exhibits fast prepulse-independent activation kinetics and deactivates much more slowly, but shows no inactivation. The sequence is that of Voltage-gated delayed rectifier potassium channel KCNH4 from Homo sapiens (Human).